The primary structure comprises 101 residues: Urease subunit beta (101 aa).

Belongs to the urease beta subunit family. In terms of assembly, heterotrimer of UreA (gamma), UreB (beta) and UreC (alpha) subunits. Three heterotrimers associate to form the active enzyme.

The protein resides in the cytoplasm. The catalysed reaction is urea + 2 H2O + H(+) = hydrogencarbonate + 2 NH4(+). It functions in the pathway nitrogen metabolism; urea degradation; CO(2) and NH(3) from urea (urease route): step 1/1. The chain is Urease subunit beta from Pseudomonas fluorescens (strain ATCC BAA-477 / NRRL B-23932 / Pf-5).